Here is a 464-residue protein sequence, read N- to C-terminus: E3 ubiquitin-protein ligase RNF38 (464 aa).

Residues 1–94 (MRESEDSPSP…NSISQDENYH (94 aa)) are disordered. The Bipartite nuclear localization signal 1 signature appears at 6–20 (DSPSPKRQRLSHSVF). Polar residues predominate over residues 38–53 (MTSNRQPPSVRPNQHH). The short motif at 64–79 (RNRRSPPVRRQRGRRE) is the Bipartite nuclear localization signal 2 element. The span at 64–83 (RNRRSPPVRRQRGRRERLSR) shows a compositional bias: basic residues. The RING-type zinc finger occupies 412–453 (CVVCMCDFESRQLLRVLPCNHEFHAKCVDKWLKGNRTCPICR).

The protein resides in the nucleus. It carries out the reaction S-ubiquitinyl-[E2 ubiquitin-conjugating enzyme]-L-cysteine + [acceptor protein]-L-lysine = [E2 ubiquitin-conjugating enzyme]-L-cysteine + N(6)-ubiquitinyl-[acceptor protein]-L-lysine.. It participates in protein modification; protein ubiquitination. Functionally, acts as an E3 ubiquitin-protein ligase able to ubiquitinate p53/TP53 which promotes its relocalization to discrete foci associated with PML nuclear bodies. Exhibits preference for UBE2D2 as a E2 enzyme. This chain is E3 ubiquitin-protein ligase RNF38, found in Mus musculus (Mouse).